The primary structure comprises 283 residues: Eukaryotic translation initiation factor 3 subunit K (283 aa).

One can recognise a PCI domain in the interval 52–263 (YDLLANLAIL…EIKATVIREE (212 aa)). The interval 114 to 135 (EATTTDADNAGSLSGDDDDDEV) is disordered.

It belongs to the eIF-3 subunit K family. As to quaternary structure, component of the eukaryotic translation initiation factor 3 (eIF-3) complex.

The protein localises to the cytoplasm. Component of the eukaryotic translation initiation factor 3 (eIF-3) complex, which is involved in protein synthesis of a specialized repertoire of mRNAs and, together with other initiation factors, stimulates binding of mRNA and methionyl-tRNAi to the 40S ribosome. The eIF-3 complex specifically targets and initiates translation of a subset of mRNAs involved in cell proliferation. The chain is Eukaryotic translation initiation factor 3 subunit K from Mycosarcoma maydis (Corn smut fungus).